Reading from the N-terminus, the 76-residue chain is Conotoxin MaIr332 (76 aa).

Positions 1 to 21 (MKLTCVIVAVLFLTAWTFVTA) are cleaved as a signal peptide. The propeptide occupies 22 to 48 (DDSGNGLENLFSKAHHEMKNPKDSKLN). Intrachain disulfides connect cysteine 51–cysteine 66, cysteine 58–cysteine 70, and cysteine 65–cysteine 75.

Belongs to the conotoxin O1 superfamily. In terms of tissue distribution, expressed by the venom duct.

It localises to the secreted. The polypeptide is Conotoxin MaIr332 (Conus marmoreus (Marble cone)).